The following is a 264-amino-acid chain: Thymidylate synthase (264 aa).

Position 21 (arginine 21) interacts with dUMP. A (6R)-5,10-methylene-5,6,7,8-tetrahydrofolate-binding site is contributed by histidine 51. Arginine 126–arginine 127 is a dUMP binding site. Cysteine 146 (nucleophile) is an active-site residue. DUMP contacts are provided by residues arginine 166–aspartate 169, asparagine 177, and histidine 207–tyrosine 209. Aspartate 169 is a (6R)-5,10-methylene-5,6,7,8-tetrahydrofolate binding site. A (6R)-5,10-methylene-5,6,7,8-tetrahydrofolate-binding site is contributed by alanine 263.

This sequence belongs to the thymidylate synthase family. Bacterial-type ThyA subfamily. As to quaternary structure, homodimer.

The protein localises to the cytoplasm. It catalyses the reaction dUMP + (6R)-5,10-methylene-5,6,7,8-tetrahydrofolate = 7,8-dihydrofolate + dTMP. It participates in pyrimidine metabolism; dTTP biosynthesis. Its function is as follows. Catalyzes the reductive methylation of 2'-deoxyuridine-5'-monophosphate (dUMP) to 2'-deoxythymidine-5'-monophosphate (dTMP) while utilizing 5,10-methylenetetrahydrofolate (mTHF) as the methyl donor and reductant in the reaction, yielding dihydrofolate (DHF) as a by-product. This enzymatic reaction provides an intracellular de novo source of dTMP, an essential precursor for DNA biosynthesis. This chain is Thymidylate synthase, found in Chelativorans sp. (strain BNC1).